The chain runs to 429 residues: Ribosomal RNA small subunit methyltransferase B (429 aa).

S-adenosyl-L-methionine-binding positions include 254–260, D277, D303, and D322; that span reads CAGPGGK. C375 serves as the catalytic Nucleophile.

The protein belongs to the class I-like SAM-binding methyltransferase superfamily. RsmB/NOP family.

Its subcellular location is the cytoplasm. It catalyses the reaction cytidine(967) in 16S rRNA + S-adenosyl-L-methionine = 5-methylcytidine(967) in 16S rRNA + S-adenosyl-L-homocysteine + H(+). In terms of biological role, specifically methylates the cytosine at position 967 (m5C967) of 16S rRNA. The polypeptide is Ribosomal RNA small subunit methyltransferase B (Escherichia coli O6:K15:H31 (strain 536 / UPEC)).